The chain runs to 328 residues: Carbonic anhydrase-related protein 11 (328 aa).

An N-terminal signal peptide occupies residues 1–23 (MGAAARLSAPRALVLWAALGAAA). The 271-residue stretch at 33 to 303 (DWWSYKDNLQ…LAHRALRGNR (271 aa)) folds into the Alpha-carbonic anhydrase domain. 3 N-linked (GlcNAc...) asparagine glycosylation sites follow: Asn118, Asn170, and Asn260. The disordered stretch occupies residues 299–328 (LRGNRDPRHPERRCRGPNYRLHVDGAPHGR). Positions 319-328 (LHVDGAPHGR) are enriched in basic and acidic residues.

This sequence belongs to the alpha-carbonic anhydrase family.

It localises to the secreted. Functionally, does not have a catalytic activity. The chain is Carbonic anhydrase-related protein 11 (CA11) from Pongo abelii (Sumatran orangutan).